A 799-amino-acid chain; its full sequence is Mitochondrial intermediate peptidase (799 aa).

Zn(2+) is bound at residue His-562. Residue Glu-563 is part of the active site. 2 residues coordinate Zn(2+): His-566 and His-569.

Belongs to the peptidase M3 family. It depends on Zn(2+) as a cofactor.

It localises to the mitochondrion matrix. The enzyme catalyses Release of an N-terminal octapeptide as second stage of processing of some proteins imported into the mitochondrion.. Its function is as follows. Cleaves proteins, imported into the mitochondrion, to their mature size. While most mitochondrial precursor proteins are processed to the mature form in one step by mitochondrial processing peptidase (MPP), the sequential cleavage by MIP of an octapeptide after initial processing by MPP is a required step for a subgroup of nuclear-encoded precursor proteins destined for the matrix or the inner membrane. The polypeptide is Mitochondrial intermediate peptidase (oct1) (Aspergillus niger (strain ATCC MYA-4892 / CBS 513.88 / FGSC A1513)).